Reading from the N-terminus, the 1102-residue chain is Trafficking protein particle complex II-specific subunit 130 (1102 aa).

The protein belongs to the TMEM1 family. In terms of assembly, part of the multisubunit TRAPP (transport protein particle) II complex composed of BET3, BET5, TRS20, TRS23, TRS31, TRS33, TRS65, TRS120 and TRS130. Interacts with YPT31 and YPT32.

Its subcellular location is the golgi apparatus. Specific subunit of the TRAPP II complex, a highly conserved vesicle tethering complex that functions in the late Golgi as a guanine nucleotide exchange factor (GEF) for the Golgi YPT1 GTPase. TRS130 plays a role in the YPT GEF activity of TRAPP II in concert with the two other TRAPP II-specific subunits TRS65 and TRS120. Required for both the cytoplasm-to-vacuole targeting (Cvt) pathway and starvation-induced autophagy through its role in ATG8 and ATG9 trafficking. In Saccharomyces cerevisiae (strain ATCC 204508 / S288c) (Baker's yeast), this protein is Trafficking protein particle complex II-specific subunit 130 (TRS130).